The primary structure comprises 245 residues: Orotidine 5'-phosphate decarboxylase (245 aa).

Residues Asp-22, Lys-44, 71-80 (DLKFHDIPNT), Thr-131, Arg-192, Gln-201, Gly-221, and Arg-222 contribute to the substrate site. The active-site Proton donor is Lys-73.

It belongs to the OMP decarboxylase family. Type 1 subfamily. As to quaternary structure, homodimer.

It carries out the reaction orotidine 5'-phosphate + H(+) = UMP + CO2. It participates in pyrimidine metabolism; UMP biosynthesis via de novo pathway; UMP from orotate: step 2/2. Catalyzes the decarboxylation of orotidine 5'-monophosphate (OMP) to uridine 5'-monophosphate (UMP). The polypeptide is Orotidine 5'-phosphate decarboxylase (Escherichia coli O81 (strain ED1a)).